The sequence spans 139 residues: Actin-depolymerizing factor 7 (139 aa).

The 133-residue stretch at 7–139 (GMAVDDECKL…GLDVIRGRAN (133 aa)) folds into the ADF-H domain.

This sequence belongs to the actin-binding proteins ADF family.

Its function is as follows. Actin-depolymerizing protein. Severs actin filaments (F-actin) and binds to actin monomers. This Oryza sativa subsp. japonica (Rice) protein is Actin-depolymerizing factor 7 (ADF7).